A 599-amino-acid chain; its full sequence is Kelch-like protein 41a (599 aa).

Positions valine 32 to aspartate 102 constitute a BTB domain. In terms of domain architecture, BACK spans cysteine 137–glutamate 239. 5 Kelch repeats span residues leucine 339–asparagine 391, leucine 393–glycine 440, leucine 441–glycine 488, lysine 489–glycine 535, and leucine 537–leucine 591.

It is found in the cytoplasm. It localises to the cytoskeleton. Its subcellular location is the sarcoplasmic reticulum membrane. The protein localises to the endoplasmic reticulum membrane. In terms of biological role, involved in skeletal muscle development and differentiation. The chain is Kelch-like protein 41a (klhl41a) from Danio rerio (Zebrafish).